The primary structure comprises 376 residues: Nuclear egress protein 1 (376 aa).

The residue at position 19 (Ser19) is a Phosphoserine. The tract at residues 22-57 (RKRRQRELASKVASTVNGATSANNHGEPPSPADARP) is disordered. A compositionally biased stretch (polar residues) spans 33–45 (VASTVNGATSANN). The CCCH-type zinc-finger motif lies at 106–211 (CLDISPYGNE…HVIFENPDVH (106 aa)). The tract at residues 316–376 (VVSTNGCGPS…PLFLNSIRAP (61 aa)) is disordered. Residues 317–332 (VSTNGCGPSSSSQSTP) are compositionally biased toward polar residues.

It belongs to the herpesviridae NEC1 protein family. In terms of assembly, forms a heterohexameric complex with NEC2. Interacts with capsid vertex specific component 2/CVC2; this interaction directs the capsid to the host inner nuclear membrane to initiate budding. In terms of processing, phosphorylated at serine residues in the N-terminus. This phosphorylation regulates the localization within the inner nuclear membrane. Phosphorylation by viral kinase UL97 at Ser-19 plays an important role for correct viral nuclear egress complex (NEC) localization.

The protein localises to the host nucleus inner membrane. Its function is as follows. Plays an essential role in virion nuclear egress, the first step of virion release from infected cell. Within the host nucleus, NEC1 interacts with the newly formed capsid through the vertexes and directs it to the inner nuclear membrane by associating with NEC2. Induces the budding of the capsid at the inner nuclear membrane as well as its envelopment into the perinuclear space. There, the NEC1/NEC2 complex promotes the fusion of the enveloped capsid with the outer nuclear membrane and the subsequent release of the viral capsid into the cytoplasm where it will reach the secondary budding sites in the host Golgi or trans-Golgi network. This Homo sapiens (Human) protein is Nuclear egress protein 1.